The chain runs to 171 residues: ATP synthase subunit b (171 aa).

The chain crosses the membrane as a helical span at residues 12–34; the sequence is FALNLNLFETNVINLAVVAFGLY.

It belongs to the ATPase B chain family. In terms of assembly, F-type ATPases have 2 components, F(1) - the catalytic core - and F(0) - the membrane proton channel. F(1) has five subunits: alpha(3), beta(3), gamma(1), delta(1), epsilon(1). F(0) has four main subunits: a(1), b(1), b'(1) and c(10-14). The alpha and beta chains form an alternating ring which encloses part of the gamma chain. F(1) is attached to F(0) by a central stalk formed by the gamma and epsilon chains, while a peripheral stalk is formed by the delta, b and b' chains.

The protein resides in the cellular thylakoid membrane. Functionally, f(1)F(0) ATP synthase produces ATP from ADP in the presence of a proton or sodium gradient. F-type ATPases consist of two structural domains, F(1) containing the extramembraneous catalytic core and F(0) containing the membrane proton channel, linked together by a central stalk and a peripheral stalk. During catalysis, ATP synthesis in the catalytic domain of F(1) is coupled via a rotary mechanism of the central stalk subunits to proton translocation. Component of the F(0) channel, it forms part of the peripheral stalk, linking F(1) to F(0). This chain is ATP synthase subunit b, found in Prochlorococcus marinus (strain SARG / CCMP1375 / SS120).